The chain runs to 113 residues: Fruiting body-specific class I hydrophobin fbh1 (113 aa).

The first 23 residues, 1-23, serve as a signal peptide directing secretion; that stretch reads MFSIRIATVVLAASAALRPPARI. Cystine bridges form between C33-C92, C40-C86, C41-C73, and C93-C106.

Belongs to the fungal hydrophobin family. In terms of assembly, self-assembles to form functional amyloid fibrils called rodlets. Self-assembly into fibrillar rodlets occurs spontaneously at hydrophobic:hydrophilic interfaces and the rodlets further associate laterally to form amphipathic monolayers.

It localises to the secreted. The protein localises to the cell wall. Aerial growth, conidiation, and dispersal of filamentous fungi in the environment rely upon a capability of their secreting small amphipathic proteins called hydrophobins (HPBs) with low sequence identity. Class I can self-assemble into an outermost layer of rodlet bundles on aerial cell surfaces, conferring cellular hydrophobicity that supports fungal growth, development and dispersal; whereas Class II form highly ordered films at water-air interfaces through intermolecular interactions but contribute nothing to the rodlet structure. Fbh1 is a fruiting body-specific class I hydrophobin that is involved in the growth rate and primordia formation. The chain is Fruiting body-specific class I hydrophobin fbh1 from Pleurotus ostreatus (Oyster mushroom).